The primary structure comprises 353 residues: Nicotinate-nucleotide--dimethylbenzimidazole phosphoribosyltransferase (353 aa).

E319 serves as the catalytic Proton acceptor.

Belongs to the CobT family.

It catalyses the reaction 5,6-dimethylbenzimidazole + nicotinate beta-D-ribonucleotide = alpha-ribazole 5'-phosphate + nicotinate + H(+). Its pathway is nucleoside biosynthesis; alpha-ribazole biosynthesis; alpha-ribazole from 5,6-dimethylbenzimidazole: step 1/2. In terms of biological role, catalyzes the synthesis of alpha-ribazole-5'-phosphate from nicotinate mononucleotide (NAMN) and 5,6-dimethylbenzimidazole (DMB). The polypeptide is Nicotinate-nucleotide--dimethylbenzimidazole phosphoribosyltransferase (Syntrophobacter fumaroxidans (strain DSM 10017 / MPOB)).